Reading from the N-terminus, the 145-residue chain is Antimicrobial peptide NK-lysin (145 aa).

The N-terminal stretch at 1-22 is a signal peptide; the sequence is MTSRALLLLASALLGTPGLTFS. A propeptide spanning residues 23–62 is cleaved from the precursor; the sequence is GLNPESYDLATAHLSDGEQFCQGLTQEDLQGDLLTERERQ. One can recognise a Saposin B-type domain in the interval 62–142; it reads QGIACWSCRK…VDIKLCKHKA (81 aa). Cystine bridges form between Cys66–Cys138, Cys69–Cys132, and Cys97–Cys107. The propeptide occupies 141–145; that stretch reads KAGLI.

Its subcellular location is the secreted. Functionally, may be an effector molecule of cytotoxic activity. Has antimicrobial activity. This Equus caballus (Horse) protein is Antimicrobial peptide NK-lysin (NKL).